The primary structure comprises 394 residues: Phosphopentomutase (394 aa).

Residues D13, D286, H291, D327, H328, and H339 each contribute to the Mn(2+) site.

This sequence belongs to the phosphopentomutase family. Mn(2+) serves as cofactor.

It is found in the cytoplasm. The enzyme catalyses 2-deoxy-alpha-D-ribose 1-phosphate = 2-deoxy-D-ribose 5-phosphate. It catalyses the reaction alpha-D-ribose 1-phosphate = D-ribose 5-phosphate. The protein operates within carbohydrate degradation; 2-deoxy-D-ribose 1-phosphate degradation; D-glyceraldehyde 3-phosphate and acetaldehyde from 2-deoxy-alpha-D-ribose 1-phosphate: step 1/2. Its function is as follows. Isomerase that catalyzes the conversion of deoxy-ribose 1-phosphate (dRib-1-P) and ribose 1-phosphate (Rib-1-P) to deoxy-ribose 5-phosphate (dRib-5-P) and ribose 5-phosphate (Rib-5-P), respectively. This is Phosphopentomutase from Bacillus mycoides (strain KBAB4) (Bacillus weihenstephanensis).